Consider the following 372-residue polypeptide: Glutamate 5-kinase (372 aa).

ATP is bound at residue K14. Substrate-binding residues include S54, D141, and N153. Residues 173–174 (TD) and 215–221 (TGGMSTK) each bind ATP. The PUA domain maps to 280–358 (QGSLVLDAGA…DEIESVLGYD (79 aa)).

Belongs to the glutamate 5-kinase family.

It localises to the cytoplasm. The catalysed reaction is L-glutamate + ATP = L-glutamyl 5-phosphate + ADP. The protein operates within amino-acid biosynthesis; L-proline biosynthesis; L-glutamate 5-semialdehyde from L-glutamate: step 1/2. Functionally, catalyzes the transfer of a phosphate group to glutamate to form L-glutamate 5-phosphate. The protein is Glutamate 5-kinase of Shewanella oneidensis (strain ATCC 700550 / JCM 31522 / CIP 106686 / LMG 19005 / NCIMB 14063 / MR-1).